A 129-amino-acid chain; its full sequence is Lysozyme C, milk isozyme (129 aa).

Residues 1 to 129 (KIFSKCELAR…LSKYLASCNL (129 aa)) enclose the C-type lysozyme domain. Disulfide bonds link cysteine 6/cysteine 127, cysteine 30/cysteine 115, cysteine 65/cysteine 80, and cysteine 76/cysteine 94. Residues glutamate 35 and aspartate 53 contribute to the active site. Ca(2+)-binding residues include lysine 82, aspartate 85, asparagine 87, aspartate 90, and aspartate 91.

This sequence belongs to the glycosyl hydrolase 22 family. As to quaternary structure, monomer. It depends on Ca(2+) as a cofactor.

It carries out the reaction Hydrolysis of (1-&gt;4)-beta-linkages between N-acetylmuramic acid and N-acetyl-D-glucosamine residues in a peptidoglycan and between N-acetyl-D-glucosamine residues in chitodextrins.. In terms of biological role, lysozymes have primarily a bacteriolytic function; those in tissues and body fluids are associated with the monocyte-macrophage system and enhance the activity of immunoagents. The sequence is that of Lysozyme C, milk isozyme from Canis lupus familiaris (Dog).